Reading from the N-terminus, the 553-residue chain is Hyaluronan synthase 3 (553 aa).

The Cytoplasmic segment spans residues 1–15 (MPVQLTTALRVVGTS). The chain crosses the membrane as a helical span at residues 16–36 (LFALAVLGGILAAYVTGYQFI). Over 37 to 44 (HTEKHYLS) the chain is Extracellular. Residues 45 to 65 (FGLYGAILGLHLLIQSLFAFL) traverse the membrane as a helical segment. Over 66–377 (EHRRMRRAGQ…NSLWFHKHHL (312 aa)) the chain is Cytoplasmic. A helical transmembrane segment spans residues 378–398 (WMTYESVVTGFFPFFLIATVI). The Extracellular segment spans residues 399 to 408 (QLFYRGRIWN). Residues 409–429 (ILLFLLTVQLVGIIKATYACF) form a helical membrane-spanning segment. Residues 430–440 (LRGNAEMIFMS) lie on the Cytoplasmic side of the membrane. A helical membrane pass occupies residues 441 to 461 (LYSLLYMSSLLPAKIFAIATI). Residue N462 is glycosylated (N-linked (GlcNAc...) asparagine). At 462-473 (NKSGWGTSGRKT) the chain is on the extracellular side. The helical transmembrane segment at 474-494 (IVVNFIGLIPVSIWVAVLLGG) threads the bilayer. Residues 495-515 (LAYTAYCQDLFSETELAFLVS) lie on the Cytoplasmic side of the membrane. Residues 516-536 (GAILYGCYWVALLMLYLAIIA) traverse the membrane as a helical segment. Residues 537–553 (RRCGKKPEQYSLAFAEV) lie on the Extracellular side of the membrane.

Belongs to the NodC/HAS family. Homodimers. Forms heterodimers with HAS2 and HAS1. Mg(2+) serves as cofactor. Post-translationally, O-GlcNAcylation increases the hyaluronan synthase activity, HAS3 stability and its plasma membrane residence. The concentration of UDP-GlcNAc controls the level of O-GlcNAc modification.

The protein localises to the cell membrane. It is found in the golgi apparatus membrane. Its subcellular location is the golgi apparatus. It localises to the trans-Golgi network membrane. The protein resides in the early endosome. The catalysed reaction is [hyaluronan](n) + UDP-N-acetyl-alpha-D-glucosamine = N-acetyl-beta-D-glucosaminyl-(1-&gt;4)-[hyaluronan](n) + UDP + H(+). It catalyses the reaction N-acetyl-beta-D-glucosaminyl-(1-&gt;4)-[hyaluronan](n) + UDP-alpha-D-glucuronate = [hyaluronan](n+1) + UDP + H(+). Its pathway is glycan biosynthesis; hyaluronan biosynthesis. Its activity is regulated as follows. The enzymatic activity depends on the availability of cytosolic levels of UDP-GlcUA and UDP-GlcNAc. Catalyzes the addition of GlcNAc or GlcUA monosaccharides to the nascent hyaluronan polymer. Therefore, it is essential to hyaluronan synthesis a major component of most extracellular matrices that has a structural role in tissues architectures and regulates cell adhesion, migration and differentiation. This is one of three isoenzymes responsible for cellular hyaluronan synthesis. In Homo sapiens (Human), this protein is Hyaluronan synthase 3.